The primary structure comprises 640 residues: ATP-dependent rRNA helicase spb4 (640 aa).

A Q motif motif is present at residues Trp14 to Ala42. The Helicase ATP-binding domain occupies Ile45–Val249. Ala58 to Thr65 is a binding site for ATP. The DEAD box motif lies at Asp197–Asp200. The region spanning Ala283–Ala437 is the Helicase C-terminal domain. A coiled-coil region spans residues Ala521–Asp629. 2 disordered regions span residues Arg531 to Lys595 and Arg607 to Asp640. Residues Lys568 to Lys582 are compositionally biased toward basic residues. Basic and acidic residues predominate over residues Ala583–Lys595. Over residues Gly630 to Asp640 the composition is skewed to acidic residues.

The protein belongs to the DEAD box helicase family. DDX55/SPB4 subfamily. In terms of assembly, component of pre-60S ribosomal complexes.

The protein resides in the nucleus. The protein localises to the nucleolus. It catalyses the reaction ATP + H2O = ADP + phosphate + H(+). Functionally, ATP-binding RNA helicase involved in the biogenesis of 60S ribosomal subunits. Binds 90S pre-ribosomal particles and dissociates from pre-60S ribosomal particles after processing of 27SB pre-rRNA. Required for the normal formation of 18S rRNA through the processing of pre-rRNAs at sites A0, A1 and A2, and the normal formation of 25S and 5.8S rRNAs through the processing of pre-rRNAs at sites C1 and C2. The sequence is that of ATP-dependent rRNA helicase spb4 from Neosartorya fischeri (strain ATCC 1020 / DSM 3700 / CBS 544.65 / FGSC A1164 / JCM 1740 / NRRL 181 / WB 181) (Aspergillus fischerianus).